A 152-amino-acid chain; its full sequence is Deoxyuridine 5'-triphosphate nucleotidohydrolase (152 aa).

Substrate is bound by residues 71 to 73, Asn84, 88 to 90, and Met98; these read RSG and LID.

The protein belongs to the dUTPase family. Mg(2+) is required as a cofactor.

The catalysed reaction is dUTP + H2O = dUMP + diphosphate + H(+). The protein operates within pyrimidine metabolism; dUMP biosynthesis; dUMP from dCTP (dUTP route): step 2/2. Its function is as follows. This enzyme is involved in nucleotide metabolism: it produces dUMP, the immediate precursor of thymidine nucleotides and it decreases the intracellular concentration of dUTP so that uracil cannot be incorporated into DNA. In Shewanella pealeana (strain ATCC 700345 / ANG-SQ1), this protein is Deoxyuridine 5'-triphosphate nucleotidohydrolase.